The primary structure comprises 428 residues: Adenylosuccinate synthetase (428 aa).

GTP is bound by residues 13–19 (GDEGKGK) and 41–43 (GHT). Residue Asp-14 is the Proton acceptor of the active site. Mg(2+)-binding residues include Asp-14 and Gly-41. Residues 14 to 17 (DEGK), 39 to 42 (NAGH), Thr-130, Arg-144, Gln-223, Thr-238, and Arg-302 each bind IMP. Catalysis depends on His-42, which acts as the Proton donor. 298–304 (ASTGRRR) lines the substrate pocket. GTP is bound by residues Arg-304, 330–332 (KLD), and 412–414 (STG).

It belongs to the adenylosuccinate synthetase family. In terms of assembly, homodimer. It depends on Mg(2+) as a cofactor.

Its subcellular location is the cytoplasm. The catalysed reaction is IMP + L-aspartate + GTP = N(6)-(1,2-dicarboxyethyl)-AMP + GDP + phosphate + 2 H(+). It participates in purine metabolism; AMP biosynthesis via de novo pathway; AMP from IMP: step 1/2. Functionally, plays an important role in the de novo pathway of purine nucleotide biosynthesis. Catalyzes the first committed step in the biosynthesis of AMP from IMP. The polypeptide is Adenylosuccinate synthetase (Dichelobacter nodosus (strain VCS1703A)).